A 148-amino-acid polypeptide reads, in one-letter code: Truncated transcription factor CAULIFLOWER D (148 aa).

Residues 1–61 (MGRGRVEMKR…GKLFEYSSES (61 aa)) form the MADS-box domain. A K-box; partial domain is found at 90–148 (QTNWSMEYSRLKAKIELWERNQRHYLGEDLESISIKELQNLEQQLDTSLKHIRSRKVCK).

As to quaternary structure, homodimer capable of binding to CArG-box sequences.

It is found in the nucleus. Its function is as follows. Probable transcription factor that promotes early floral meristem identity in synergy with APETALA1, FRUITFULL and LEAFY. Is required subsequently for the transition of an inflorescence meristem into a floral meristem. Seems to be partially redundant to the function of APETALA1. This Brassica oleracea var. botrytis (Cauliflower) protein is Truncated transcription factor CAULIFLOWER D (CAL-D).